Reading from the N-terminus, the 393-residue chain is NAD(P)H-quinone oxidoreductase subunit H, chloroplastic (393 aa).

It belongs to the complex I 49 kDa subunit family. NDH is composed of at least 16 different subunits, 5 of which are encoded in the nucleus.

The protein localises to the plastid. The protein resides in the chloroplast thylakoid membrane. It carries out the reaction a plastoquinone + NADH + (n+1) H(+)(in) = a plastoquinol + NAD(+) + n H(+)(out). The enzyme catalyses a plastoquinone + NADPH + (n+1) H(+)(in) = a plastoquinol + NADP(+) + n H(+)(out). NDH shuttles electrons from NAD(P)H:plastoquinone, via FMN and iron-sulfur (Fe-S) centers, to quinones in the photosynthetic chain and possibly in a chloroplast respiratory chain. The immediate electron acceptor for the enzyme in this species is believed to be plastoquinone. Couples the redox reaction to proton translocation, and thus conserves the redox energy in a proton gradient. The sequence is that of NAD(P)H-quinone oxidoreductase subunit H, chloroplastic from Cucumis sativus (Cucumber).